A 212-amino-acid polypeptide reads, in one-letter code: Ribosomal RNA small subunit methyltransferase G (212 aa).

S-adenosyl-L-methionine is bound by residues glycine 73, phenylalanine 78, 124-125, and arginine 137; that span reads IE.

The protein belongs to the methyltransferase superfamily. RNA methyltransferase RsmG family.

It is found in the cytoplasm. Its function is as follows. Specifically methylates the N7 position of a guanine in 16S rRNA. The protein is Ribosomal RNA small subunit methyltransferase G of Karelsulcia muelleri (strain GWSS) (Sulcia muelleri).